The chain runs to 453 residues: Tryptophan dimethylallyltransferase cnsF (453 aa).

L-tryptophan is bound by residues isoleucine 84 to leucine 85 and glutamate 93. Substrate is bound by residues arginine 104, lysine 190, and tyrosine 192. L-tryptophan is bound by residues tyrosine 194 and arginine 248. The substrate site is built by arginine 261, lysine 263, tyrosine 265, glutamine 347, and tyrosine 349.

The protein belongs to the tryptophan dimethylallyltransferase family. As to quaternary structure, homodimer.

It carries out the reaction L-tryptophan + dimethylallyl diphosphate = 4-(3-methylbut-2-enyl)-L-tryptophan + diphosphate. The protein operates within alkaloid biosynthesis. Tryptophan dimethylallyltransferase; part of the gene cluster that mediates the biosynthesis of communesins, a prominent class of indole alkaloids with great potential as pharmaceuticals. Communesins are biosynthesized by the coupling of tryptamine and aurantioclavine, two building blocks derived from L-tryptophan. The L-tryptophan decarboxylase cnsB converts L-tryptophan to tryptamine, whereas the tryptophan dimethylallyltransferase cnsF converts L-tryptophan to 4-dimethylallyl tryptophan which is further transformed to aurantioclavine by the aurantioclavine synthase cnsA, probably aided by the catalase cnsD. The cytochrome P450 monooxygenase cnsC catalyzes the heterodimeric coupling between the two different indole moieties, tryptamine and aurantioclavine, to construct vicinal quaternary stereocenters and yield the heptacyclic communesin scaffold. The O-methyltransferase cnsE then methylates the communesin scaffold to produce communesin K, the simplest characterized communesin that contains the heptacyclic core. The dioxygenase cnsJ converts communesin K into communesin I. Acylation to introduce the hexadienyl group at position N16 of communesin I by the acyltransferase cnsK leads to the production of communesin B. The hexadienyl group is produced by the highly reducing polyketide synthase cnsI, before being hydrolytically removed from cnsI by the serine hydrolase cnsH, converted into hexadienyl-CoA by the CoA ligase cnsG, and then transferred to communesin I by cnsK. Surprisingly, cnsK may also be a promiscuous acyltransferase that can tolerate a range of acyl groups, including acetyl-, propionyl-, and butyryl-CoA, which lead to communesins A, G and H respectively. The roles of the alpha-ketoglutarate-dependent dioxygenases cnsM and cnsP have still to be determined. This Penicillium expansum (Blue mold rot fungus) protein is Tryptophan dimethylallyltransferase cnsF.